Consider the following 172-residue polypeptide: Adenine phosphoribosyltransferase (172 aa).

The protein belongs to the purine/pyrimidine phosphoribosyltransferase family. In terms of assembly, homodimer.

The protein resides in the cytoplasm. It carries out the reaction AMP + diphosphate = 5-phospho-alpha-D-ribose 1-diphosphate + adenine. Its pathway is purine metabolism; AMP biosynthesis via salvage pathway; AMP from adenine: step 1/1. Its function is as follows. Catalyzes a salvage reaction resulting in the formation of AMP, that is energically less costly than de novo synthesis. This Streptococcus thermophilus (strain ATCC BAA-250 / LMG 18311) protein is Adenine phosphoribosyltransferase.